Reading from the N-terminus, the 95-residue chain is MTLFSSISSISNPMTSSKSSIASFGSGTSMSSNSIACGGGCGGGSGGILGLGLGLGLNLFGGSGSRGACGGNGRSGNPAQGGNGGSCCGGPCCGI.

The tract at residues 1–31 (MTLFSSISSISNPMTSSKSSIASFGSGTSMS) is disordered.

This sequence belongs to the hssA/B family.

In Dictyostelium discoideum (Social amoeba), this protein is HssA/B-like protein 45 (hssl45).